Here is a 325-residue protein sequence, read N- to C-terminus: N-acetyl-gamma-glutamyl-phosphate reductase (325 aa).

Residue Cys-131 is part of the active site.

It belongs to the NAGSA dehydrogenase family. Type 1 subfamily.

The protein resides in the cytoplasm. The enzyme catalyses N-acetyl-L-glutamate 5-semialdehyde + phosphate + NADP(+) = N-acetyl-L-glutamyl 5-phosphate + NADPH + H(+). The protein operates within amino-acid biosynthesis; L-arginine biosynthesis; N(2)-acetyl-L-ornithine from L-glutamate: step 3/4. Functionally, catalyzes the NADPH-dependent reduction of N-acetyl-5-glutamyl phosphate to yield N-acetyl-L-glutamate 5-semialdehyde. The polypeptide is N-acetyl-gamma-glutamyl-phosphate reductase (Methylobacterium sp. (strain 4-46)).